Reading from the N-terminus, the 258-residue chain is Imidazole glycerol phosphate synthase subunit HisF (258 aa).

Residues aspartate 11 and aspartate 130 contribute to the active site.

Belongs to the HisA/HisF family. Heterodimer of HisH and HisF.

The protein localises to the cytoplasm. The catalysed reaction is 5-[(5-phospho-1-deoxy-D-ribulos-1-ylimino)methylamino]-1-(5-phospho-beta-D-ribosyl)imidazole-4-carboxamide + L-glutamine = D-erythro-1-(imidazol-4-yl)glycerol 3-phosphate + 5-amino-1-(5-phospho-beta-D-ribosyl)imidazole-4-carboxamide + L-glutamate + H(+). It functions in the pathway amino-acid biosynthesis; L-histidine biosynthesis; L-histidine from 5-phospho-alpha-D-ribose 1-diphosphate: step 5/9. IGPS catalyzes the conversion of PRFAR and glutamine to IGP, AICAR and glutamate. The HisF subunit catalyzes the cyclization activity that produces IGP and AICAR from PRFAR using the ammonia provided by the HisH subunit. The sequence is that of Imidazole glycerol phosphate synthase subunit HisF from Escherichia coli O1:K1 / APEC.